Reading from the N-terminus, the 245-residue chain is Phosphoribosylaminoimidazole-succinocarboxamide synthase (245 aa).

It belongs to the SAICAR synthetase family.

It catalyses the reaction 5-amino-1-(5-phospho-D-ribosyl)imidazole-4-carboxylate + L-aspartate + ATP = (2S)-2-[5-amino-1-(5-phospho-beta-D-ribosyl)imidazole-4-carboxamido]succinate + ADP + phosphate + 2 H(+). The protein operates within purine metabolism; IMP biosynthesis via de novo pathway; 5-amino-1-(5-phospho-D-ribosyl)imidazole-4-carboxamide from 5-amino-1-(5-phospho-D-ribosyl)imidazole-4-carboxylate: step 1/2. The sequence is that of Phosphoribosylaminoimidazole-succinocarboxamide synthase from Trichormus variabilis (strain ATCC 29413 / PCC 7937) (Anabaena variabilis).